Here is a 723-residue protein sequence, read N- to C-terminus: MKPTSLLLAATVLMSTPITSALAASATPPDVAKKPHVVKAPHGAERNDEYYWLRDDKRENKEMLAYLNAENAYTDAVMAPLKPLEDKLYDEVVARIKQDDASVPYRERGWWYYARFVTGKDYPVHARRKDGPGVDAVSIQAANAAGDFAGEQVLLDVNALGAGKDYYNVGDYEVSQDNRLLAYADDTNGRRQYTIRFKNLDTGELLPDTVTNAEPNLVWSDDGRTLFYVDKDPETLLSKRVKAHVLGTPASQDALVYEEEDDSFYMGIGRSRDDKFICISVESTVSSEMRCTPAASPGVFTVLAPRERDVEYQADHLGDRWVIRTNADGATNFKIVTAPTDSTSRKDWKDWVAHRDDVFVEGFELFDGFSVVAERANALESLRVIKADGSSDYVKADESAYSMGLSANPETGTDWLRYSYTSMTTPATTYEINTKTGERRQLKQQPVPGYDASKYVTERVWAPARDGKTKIPVTLVYRKDVARDGKAPMLQYAYGSYGASMDPNFSITNVSLLDRGVVYALAHIRGGQEMGRAWYDDGKLYNKINTFTDFIDVTDYLVKEGYAAKDRVAAMGGSAGGLLMGAVSNMAPEKYKVILTLVPFVDVVTTMLDPTIPLTTNEYDEWGNPEEKGYYDYILTYSPYDNLQAKAYPAMFVGTGLWDSQVQYWEPAKYVARLRDLNTGKGPVVFRTNMEAGHGGKSGRFRQYRERAEMFAFMLDQLGVASK.

The first 23 residues, 1 to 23, serve as a signal peptide directing secretion; sequence MKPTSLLLAATVLMSTPITSALA. Residues S574, D659, and H694 each act as charge relay system in the active site.

This sequence belongs to the peptidase S9A family. In terms of assembly, monomer.

Nearly completely inhibited by 0.5 mM ZnCl(2), 0.1 mM N-tosyl-L-lysyl chloromethyl ketone (TLCK) and 0.1 mM leupeptin. Strongly inhibited by 0.5 mM CoCl(2) and 0.1 mM chymostatin. Activity is hardly affected by general serine protease inhibitors phenylmethanesulfonyl fluoride (PMSF), diisopropyl fluorophosphate (DFP) and N-tosyl-L-phenyl-alanyl chloromethyl ketone (TPCK) or by aspartyl protease inhibitor pepstatin A or by CaCl(2) and EDTA. Cysteine protease inhibitors, such as N-ethylmaleimide (NEM), iodoacetic acid and L-trans-epoxysuccinyl-leucylamido(4-guanido)butane (E-64) have no effect on activity. Functionally, sequentially removes dipeptide units (NH3-P2-P1-) from the amino termini of peptides and proteins. Is able to catalyze the removal of Asp-Arg from the amino termini of angiotensins I and II. Has slight endopeptidase activity on N-terminally blocked peptide derivatives which contain arginine residues at the P1 position. Does not hydrolyze Ala-Ala-Ala and Ala-Ala-Ala-Ala substrates or insulin beta chain. This is Dipeptidyl aminopeptidase BI from Pseudoxanthomonas mexicana.